A 109-amino-acid polypeptide reads, in one-letter code: Iron-sulfur cluster assembly protein CyaY (109 aa).

Belongs to the frataxin family.

Its function is as follows. Involved in iron-sulfur (Fe-S) cluster assembly. May act as a regulator of Fe-S biogenesis. The sequence is that of Iron-sulfur cluster assembly protein CyaY from Albidiferax ferrireducens (strain ATCC BAA-621 / DSM 15236 / T118) (Rhodoferax ferrireducens).